Reading from the N-terminus, the 355-residue chain is Peptide chain release factor 1 (355 aa).

Position 233 is an N5-methylglutamine (Gln-233).

This sequence belongs to the prokaryotic/mitochondrial release factor family. Methylated by PrmC. Methylation increases the termination efficiency of RF1.

It is found in the cytoplasm. In terms of biological role, peptide chain release factor 1 directs the termination of translation in response to the peptide chain termination codons UAG and UAA. The chain is Peptide chain release factor 1 from Caldicellulosiruptor bescii (strain ATCC BAA-1888 / DSM 6725 / KCTC 15123 / Z-1320) (Anaerocellum thermophilum).